The sequence spans 341 residues: Anthranilate phosphoribosyltransferase (341 aa).

5-phospho-alpha-D-ribose 1-diphosphate contacts are provided by residues G79, 82–83, T87, 89–92, 107–115, and S119; these read GD, NIST, and KHGNRAVSS. G79 contributes to the anthranilate binding site. S91 contacts Mg(2+). Position 110 (N110) interacts with anthranilate. R165 provides a ligand contact to anthranilate. Residues D224 and E225 each contribute to the Mg(2+) site.

Belongs to the anthranilate phosphoribosyltransferase family. As to quaternary structure, homodimer. The cofactor is Mg(2+).

It carries out the reaction N-(5-phospho-beta-D-ribosyl)anthranilate + diphosphate = 5-phospho-alpha-D-ribose 1-diphosphate + anthranilate. It participates in amino-acid biosynthesis; L-tryptophan biosynthesis; L-tryptophan from chorismate: step 2/5. Catalyzes the transfer of the phosphoribosyl group of 5-phosphorylribose-1-pyrophosphate (PRPP) to anthranilate to yield N-(5'-phosphoribosyl)-anthranilate (PRA). The polypeptide is Anthranilate phosphoribosyltransferase (Bacillus cereus (strain B4264)).